We begin with the raw amino-acid sequence, 355 residues long: Serpentine receptor class epsilon-1 (355 aa).

The next 7 membrane-spanning stretches (helical) occupy residues 28-48, 56-76, 102-122, 144-164, 172-192, 232-252, and 268-288; these read FELLAMIIEIPSFLLVIYATI, LNFIGLFMLLGYYVFLVGRFI, ILSSILQFFYMGCACGISLAV, ISLFLCSEFTVACGVSAIVML, VMAFLGVFISCASFLFYLVLF, VVLFSGVNNFVMAIILTMYMS, and FAFNCCVLLYSFLMLIIIIFS.

The protein belongs to the nematode receptor-like protein sre family.

The protein localises to the membrane. This is Serpentine receptor class epsilon-1 (sre-1) from Caenorhabditis elegans.